A 418-amino-acid chain; its full sequence is Phosphoglycerate kinase (418 aa).

The (2R)-3-phosphoglycerate site is built by valine 24, aspartate 25, phenylalanine 26, asparagine 27, arginine 40, serine 63, histidine 64, glycine 66, arginine 67, leucine 122, arginine 123, histidine 169, and arginine 170. Glycine 213 is a binding site for ADP. Residue glycine 213 participates in CDP binding. AMP contacts are provided by alanine 214 and lysine 215. Alanine 214 lines the ATP pocket. Alanine 214 is a Mg(2+) binding site. Residues alanine 217 and aspartate 218 each coordinate Mg(2+). A CDP-binding site is contributed by aspartate 218. AMP is bound at residue lysine 219. Lysine 219 is a binding site for ATP. Glycine 237 contributes to the ADP binding site. Residue glycine 237 coordinates CDP. AMP contacts are provided by glycine 238 and glycine 312. ATP is bound by residues glycine 238 and glycine 312. 2 residues coordinate CDP: glycine 337 and phenylalanine 342. An ADP-binding site is contributed by phenylalanine 342. Glutamate 343 lines the AMP pocket. ATP is bound by residues glutamate 343, aspartate 374, and threonine 375. Position 374 (aspartate 374) interacts with Mg(2+).

This sequence belongs to the phosphoglycerate kinase family. Monomer. Mg(2+) serves as cofactor.

The catalysed reaction is (2R)-3-phosphoglycerate + ATP = (2R)-3-phospho-glyceroyl phosphate + ADP. Its pathway is carbohydrate degradation; glycolysis; pyruvate from D-glyceraldehyde 3-phosphate: step 2/5. The protein is Phosphoglycerate kinase (PGK) of Euplotes crassus.